The following is a 366-amino-acid chain: DNA double-strand break repair protein Mre11 (366 aa).

Mn(2+) contacts are provided by Asp8, His10, Asp49, and Asn84. His85 serves as the catalytic Proton donor. Mn(2+) contacts are provided by His158, His186, and His188.

This sequence belongs to the MRE11/RAD32 family. As to quaternary structure, homodimer. Forms a heterotetramer composed of two Mre11 subunits and two Rad50 subunits. Mn(2+) serves as cofactor.

With respect to regulation, nuclease activity is regulated by Rad50. In terms of biological role, part of the Rad50/Mre11 complex, which is involved in the early steps of DNA double-strand break (DSB) repair. The complex may facilitate opening of the processed DNA ends to aid in the recruitment of HerA and NurA. Mre11 binds to DSB ends and has both double-stranded 3'-5' exonuclease activity and single-stranded endonuclease activity. The protein is DNA double-strand break repair protein Mre11 of Methanocaldococcus jannaschii (strain ATCC 43067 / DSM 2661 / JAL-1 / JCM 10045 / NBRC 100440) (Methanococcus jannaschii).